The following is a 281-amino-acid chain: CMT1A duplicated region transcript 15 protein-like protein (281 aa).

Disordered stretches follow at residues 107–131 (KPAW…DQPS) and 150–187 (AENV…HGGG). A compositionally biased stretch (basic and acidic residues) spans 108 to 120 (PAWEEPPPERALE). Over residues 165–178 (STAPASRSHAAPSP) the composition is skewed to low complexity. A helical transmembrane segment spans residues 207-227 (AGTTALLLQGLFIVLILVGYI).

It is found in the membrane. In Homo sapiens (Human), this protein is CMT1A duplicated region transcript 15 protein-like protein (CDRT15L2).